Consider the following 258-residue polypeptide: Spindlin-3 (258 aa).

Residues methionine 1–valine 23 are disordered. Tudor-like domain stretches follow at residues valine 50–histidine 99, valine 129–leucine 178, and valine 210–valine 255. Histone H3K4me3 and H3R8me2a binding stretches follow at residues glutamate 138 and aspartate 246–histidine 248.

It belongs to the SPIN/STSY family. As to quaternary structure, interacts with C11orf84/SPINDOC.

Functionally, exhibits H3K4me3-binding activity. This Pongo abelii (Sumatran orangutan) protein is Spindlin-3 (SPIN3).